We begin with the raw amino-acid sequence, 298 residues long: Cytochrome c oxidase subunit 2 (298 aa).

Positions 1–29 (MMAIATKRRGVAAVMSLGVATMTAVPALA) are cleaved as a signal peptide. Q30 is modified (pyrrolidone carboxylic acid). Residues 30–55 (QDVLGDLPVIGKPVNGGMNFQPASSP) lie on the Periplasmic side of the membrane. A helical membrane pass occupies residues 56 to 88 (LAHDQQWLDHFVLYIITAVTIFVCLLLLICIVR). Over 89 to 103 (FNRRANPVPARFTHN) the chain is Cytoplasmic. A helical transmembrane segment spans residues 104–134 (TPIEVIWTLVPVLILVAIGAFSLPILFRSQE). Residues 135-280 (MPNDPDLVIK…WLAGAKEEFA (146 aa)) are Periplasmic-facing. 6 residues coordinate Cu cation: H210, C245, E247, C249, H253, and M256. Residues 281 to 298 (ADASDYLPASPVKLASAE) constitute a propeptide, C-terminal propeptide.

Belongs to the cytochrome c oxidase subunit 2 family. The cofactor is binuclear copper center (CuA).

Its subcellular location is the cell inner membrane. It carries out the reaction 4 Fe(II)-[cytochrome c] + O2 + 8 H(+)(in) = 4 Fe(III)-[cytochrome c] + 2 H2O + 4 H(+)(out). Subunits I and II form the functional core of the enzyme complex. Electrons originating in cytochrome c are transferred via heme a and Cu(A) to the binuclear center formed by heme a3 and Cu(B). The polypeptide is Cytochrome c oxidase subunit 2 (ctaC) (Paracoccus denitrificans).